Reading from the N-terminus, the 311-residue chain is Ornithine carbamoyltransferase (311 aa).

Carbamoyl phosphate-binding positions include 59–62 (STRT), glutamine 86, arginine 110, and 137–140 (HPCQ). L-ornithine-binding positions include asparagine 168, aspartate 228, and 232-233 (SM). Carbamoyl phosphate is bound by residues 267–268 (CL) and arginine 295.

It belongs to the aspartate/ornithine carbamoyltransferase superfamily. OTCase family.

It localises to the cytoplasm. It carries out the reaction carbamoyl phosphate + L-ornithine = L-citrulline + phosphate + H(+). Its pathway is amino-acid biosynthesis; L-arginine biosynthesis; L-arginine from L-ornithine and carbamoyl phosphate: step 1/3. Reversibly catalyzes the transfer of the carbamoyl group from carbamoyl phosphate (CP) to the N(epsilon) atom of ornithine (ORN) to produce L-citrulline. The polypeptide is Ornithine carbamoyltransferase (Caulobacter vibrioides (strain ATCC 19089 / CIP 103742 / CB 15) (Caulobacter crescentus)).